Here is a 179-residue protein sequence, read N- to C-terminus: MYEYLDRRYALALYEVAEENNKVDEYLRDLKEVVNIIKNSEDICKILKHPEISTSRKKEIFTEIFKDKVDDKILSFLLVLIEKERILYLEEKLKEMEKIYLEKNNMILANVKTVIPLLKEEREELIEKLGNKYNKKIILEEEIDKSIIGGVYVRVGDDVLDGTLSTRLKDIKKMMLKRE.

This sequence belongs to the ATPase delta chain family. F-type ATPases have 2 components, F(1) - the catalytic core - and F(0) - the membrane proton channel. F(1) has five subunits: alpha(3), beta(3), gamma(1), delta(1), epsilon(1). F(0) has three main subunits: a(1), b(2) and c(10-14). The alpha and beta chains form an alternating ring which encloses part of the gamma chain. F(1) is attached to F(0) by a central stalk formed by the gamma and epsilon chains, while a peripheral stalk is formed by the delta and b chains.

The protein localises to the cell membrane. Functionally, f(1)F(0) ATP synthase produces ATP from ADP in the presence of a proton or sodium gradient. F-type ATPases consist of two structural domains, F(1) containing the extramembraneous catalytic core and F(0) containing the membrane proton channel, linked together by a central stalk and a peripheral stalk. During catalysis, ATP synthesis in the catalytic domain of F(1) is coupled via a rotary mechanism of the central stalk subunits to proton translocation. This protein is part of the stalk that links CF(0) to CF(1). It either transmits conformational changes from CF(0) to CF(1) or is implicated in proton conduction. This is ATP synthase subunit delta from Clostridium botulinum (strain Loch Maree / Type A3).